Reading from the N-terminus, the 201-residue chain is FMN-dependent NADH:quinone oxidoreductase (201 aa).

Residues serine 10, 16–18, 96–99, and 140–143 each bind FMN; these read SQS, MYNF, and SRGG.

This sequence belongs to the azoreductase type 1 family. In terms of assembly, homodimer. FMN is required as a cofactor.

It carries out the reaction 2 a quinone + NADH + H(+) = 2 a 1,4-benzosemiquinone + NAD(+). It catalyses the reaction N,N-dimethyl-1,4-phenylenediamine + anthranilate + 2 NAD(+) = 2-(4-dimethylaminophenyl)diazenylbenzoate + 2 NADH + 2 H(+). In terms of biological role, quinone reductase that provides resistance to thiol-specific stress caused by electrophilic quinones. Its function is as follows. Also exhibits azoreductase activity. Catalyzes the reductive cleavage of the azo bond in aromatic azo compounds to the corresponding amines. This Salmonella choleraesuis (strain SC-B67) protein is FMN-dependent NADH:quinone oxidoreductase.